A 200-amino-acid chain; its full sequence is MNFKYIVAVSILIASAYARSEENDIQSLSQRDVLEEESLREIRGIGAAILSAGKSALKGLAKGLAEHFGKRTAEDHEVMKRLEAAIHSLSQRDVLEEESLREIRGIGAAILSAGKSALKGLAKGLAEHFGKRTAEEHEMMKRLEAVMRDLDSLDYPEEASEMETRSFNQEEIANLYTKKEKRILGPILGLVSNALGGLLG.

Positions methionine 1–alanine 16 form a signal peptide, or 18. Residues phenylalanine 68 and phenylalanine 129 each carry the phenylalanine amide modification.

This sequence belongs to the bombinin family. Expressed by the skin glands.

It is found in the secreted. Functionally, has antimicrobial activity, but no hemolytic activity. Preference on killing Gram-negative non-enteric bacteria. The polypeptide is Bombinin-like peptides 3 (Bombina orientalis (Oriental fire-bellied toad)).